Reading from the N-terminus, the 216-residue chain is GTP cyclohydrolase 1 (216 aa).

Positions 108, 111, and 179 each coordinate Zn(2+).

It belongs to the GTP cyclohydrolase I family. Toroid-shaped homodecamer, composed of two pentamers of five dimers.

It carries out the reaction GTP + H2O = 7,8-dihydroneopterin 3'-triphosphate + formate + H(+). Its pathway is cofactor biosynthesis; 7,8-dihydroneopterin triphosphate biosynthesis; 7,8-dihydroneopterin triphosphate from GTP: step 1/1. The sequence is that of GTP cyclohydrolase 1 from Shewanella amazonensis (strain ATCC BAA-1098 / SB2B).